A 330-amino-acid polypeptide reads, in one-letter code: Small ribosomal subunit protein uS2 (330 aa).

Belongs to the universal ribosomal protein uS2 family.

This Bradyrhizobium sp. (strain BTAi1 / ATCC BAA-1182) protein is Small ribosomal subunit protein uS2.